A 201-amino-acid chain; its full sequence is Small ribosomal subunit protein uS4 (201 aa).

The S4 RNA-binding domain maps to 91 to 154 (TRLDNVVYRA…RKMEWFEEAQ (64 aa)).

It belongs to the universal ribosomal protein uS4 family. As to quaternary structure, part of the 30S ribosomal subunit. Contacts protein S5. The interaction surface between S4 and S5 is involved in control of translational fidelity.

One of the primary rRNA binding proteins, it binds directly to 16S rRNA where it nucleates assembly of the body of the 30S subunit. In terms of biological role, with S5 and S12 plays an important role in translational accuracy. The polypeptide is Small ribosomal subunit protein uS4 (Corynebacterium ammoniagenes (Brevibacterium ammoniagenes)).